The sequence spans 108 residues: MIPGEIRVNQALGDIELNAGRETKIIQVANHGDRPVQVGSHYHVYEVNEALKFEREETLGFRLNIPAGMAVRFEPGQCRTVELVAFDGKREIYGFHGKVMGKLESENK.

This sequence belongs to the urease beta subunit family. In terms of assembly, heterotrimer of UreA (gamma), UreB (beta) and UreC (alpha) subunits. Three heterotrimers associate to form the active enzyme.

Its subcellular location is the cytoplasm. The catalysed reaction is urea + 2 H2O + H(+) = hydrogencarbonate + 2 NH4(+). The protein operates within nitrogen metabolism; urea degradation; CO(2) and NH(3) from urea (urease route): step 1/1. The chain is Urease subunit beta from Proteus hauseri.